Consider the following 100-residue polypeptide: Urease subunit gamma (100 aa).

It belongs to the urease gamma subunit family. Heterotrimer of UreA (gamma), UreB (beta) and UreC (alpha) subunits. Three heterotrimers associate to form the active enzyme.

Its subcellular location is the cytoplasm. The catalysed reaction is urea + 2 H2O + H(+) = hydrogencarbonate + 2 NH4(+). Its pathway is nitrogen metabolism; urea degradation; CO(2) and NH(3) from urea (urease route): step 1/1. The sequence is that of Urease subunit gamma from Haemophilus influenzae (strain PittGG).